A 170-amino-acid chain; its full sequence is N-alpha-acetyltransferase 50 (170 aa).

Residues 6–155 (IELGDVTPHN…DAHVLQKNLK (150 aa)) form the N-acetyltransferase domain. Tyrosine 31 is a substrate binding site. Residue tyrosine 73 is part of the active site. Methionine 75 provides a ligand contact to substrate. 77–90 (LGCLAPYRRLGIGT) contributes to the acetyl-CoA binding site. 79–90 (CLAPYRRLGIGT) lines the CoA pocket. The active site involves histidine 112. 117–126 (NESAIDFYRK) contacts CoA. Residues 138–141 (YYKR) are substrate.

It belongs to the acetyltransferase family. GNAT subfamily.

The protein localises to the cytoplasm. It is found in the nucleus. The enzyme catalyses N-terminal L-methionyl-L-alanyl-[protein] + acetyl-CoA = N-terminal N(alpha)-acetyl-L-methionyl-L-alanyl-[protein] + CoA + H(+). It carries out the reaction N-terminal L-methionyl-L-seryl-[protein] + acetyl-CoA = N-terminal N(alpha)-acetyl-L-methionyl-L-seryl-[protein] + CoA + H(+). It catalyses the reaction N-terminal L-methionyl-L-valyl-[protein] + acetyl-CoA = N-terminal N(alpha)-acetyl-L-methionyl-L-valyl-[protein] + CoA + H(+). The catalysed reaction is N-terminal L-methionyl-L-threonyl-[protein] + acetyl-CoA = N-terminal N(alpha)-acetyl-L-methionyl-L-threonyl-[protein] + CoA + H(+). The enzyme catalyses N-terminal L-methionyl-L-lysyl-[protein] + acetyl-CoA = N-terminal N(alpha)-acetyl-L-methionyl-L-lysyl-[protein] + CoA + H(+). It carries out the reaction N-terminal L-methionyl-L-leucyl-[protein] + acetyl-CoA = N-terminal N(alpha)-acetyl-L-methionyl-L-leucyl-[protein] + CoA + H(+). It catalyses the reaction N-terminal L-methionyl-L-phenylalanyl-[protein] + acetyl-CoA = N-terminal N(alpha)-acetyl-L-methionyl-L-phenylalanyl-[protein] + CoA + H(+). The catalysed reaction is N-terminal L-methionyl-L-tyrosyl-[protein] + acetyl-CoA = N-terminal N(alpha)-acetyl-L-methionyl-L-tyrosyl-[protein] + CoA + H(+). Functionally, N-alpha-acetyltransferase that acetylates the N-terminus of proteins that retain their initiating methionine. Has a broad substrate specificity: able to acetylate the initiator methionine of most peptides, except for those with a proline in second position. Also displays N-epsilon-acetyltransferase activity by mediating acetylation of the side chain of specific lysines on proteins. The relevance of N-epsilon-acetyltransferase activity is however unclear. Required for sister chromatid cohesion during mitosis by promoting binding of CDCA5/sororin to cohesin. The sequence is that of N-alpha-acetyltransferase 50 (naa50) from Xenopus laevis (African clawed frog).